Consider the following 248-residue polypeptide: Mannose-binding protein C (248 aa).

A signal peptide spans 1-20; that stretch reads MSLFPSLPLLLLSMVAASYS. The Collagen-like domain maps to 42–99; it reads GINGFPGKDGRDGTKGEKGEPGQGLRGLQGPPGKLGPPGNPGPSGSPGPKGQKGDPGK. Residues 43-113 are disordered; that stretch reads INGFPGKDGR…DSSLAASERK (71 aa). P47 bears the 4-hydroxyproline mark. Positions 49 to 61 are enriched in basic and acidic residues; sequence KDGRDGTKGEKGE. 4-hydroxyproline is present on residues P73, P79, P82, and P88. A compositionally biased stretch (pro residues) spans 75–87; that stretch reads KLGPPGNPGPSGS. Residues 93-102 are compositionally biased toward basic and acidic residues; the sequence is QKGDPGKSPD. A coiled-coil region spans residues 112-130; it reads RKALQTEMARIKKWLTFSL. A C-type lectin domain is found at 134–245; sequence VGNKFFLTNG…CSTSHLAVCE (112 aa). Intrachain disulfides connect C155–C244 and C222–C236.

As to quaternary structure, oligomeric complex of 3 or more homotrimers. Interacts with MASP1 and MASP2. Interacts with MEP1A and MEP1B and may inhibit their catalytic activity. In terms of processing, hydroxylation on proline residues within the sequence motif, GXPG, is most likely to be 4-hydroxy as this fits the requirement for 4-hydroxylation in vertebrates.

The protein resides in the secreted. Calcium-dependent lectin involved in innate immune defense. Binds mannose, fucose and N-acetylglucosamine on different microorganisms and activates the lectin complement pathway. Binds to late apoptotic cells, as well as to apoptotic blebs and to necrotic cells, but not to early apoptotic cells, facilitating their uptake by macrophages. The polypeptide is Mannose-binding protein C (MBL2) (Gorilla gorilla gorilla (Western lowland gorilla)).